A 439-amino-acid polypeptide reads, in one-letter code: Glucose-1-phosphate adenylyltransferase (439 aa).

Alpha-D-glucose 1-phosphate-binding positions include Y116, G182, 197-198 (EK), and S215.

Belongs to the bacterial/plant glucose-1-phosphate adenylyltransferase family. Homotetramer.

It carries out the reaction alpha-D-glucose 1-phosphate + ATP + H(+) = ADP-alpha-D-glucose + diphosphate. It participates in glycan biosynthesis; glycogen biosynthesis. Functionally, involved in the biosynthesis of ADP-glucose, a building block required for the elongation reactions to produce glycogen. Catalyzes the reaction between ATP and alpha-D-glucose 1-phosphate (G1P) to produce pyrophosphate and ADP-Glc. The chain is Glucose-1-phosphate adenylyltransferase from Pasteurella multocida (strain Pm70).